Reading from the N-terminus, the 218-residue chain is MTASPSSAEGSSGLPDRPKLVLASASPRRLSLLEQIGIVPDAVVSADIDEEPRPGELPRPLAQRLARQKAEHVAAQRTDAALVLGADTVVSVGRRVLPKAEDEKTARACLKLLSGRRHKVLTAVVLRPSAGWPQGTPCERLVETSVIFHRLTDAQIDALIAQGDWQGKAGGYAIQGAAAAHIRQIGGSYSAVVGLPLFETAQLLRGQPVGKPSGGWIA.

The segment covering 1 to 10 (MTASPSSAEG) has biased composition (polar residues). A disordered region spans residues 1-20 (MTASPSSAEGSSGLPDRPKL). Asp-87 functions as the Proton acceptor in the catalytic mechanism.

This sequence belongs to the Maf family. YhdE subfamily. Requires a divalent metal cation as cofactor.

The protein localises to the cytoplasm. It catalyses the reaction dTTP + H2O = dTMP + diphosphate + H(+). The catalysed reaction is UTP + H2O = UMP + diphosphate + H(+). Its function is as follows. Nucleoside triphosphate pyrophosphatase that hydrolyzes dTTP and UTP. May have a dual role in cell division arrest and in preventing the incorporation of modified nucleotides into cellular nucleic acids. The chain is dTTP/UTP pyrophosphatase from Gluconobacter oxydans (strain 621H) (Gluconobacter suboxydans).